A 35-amino-acid polypeptide reads, in one-letter code: Photosystem I reaction center subunit Z (35 aa).

A helical membrane pass occupies residues 10-30 (LVIITTLVVPFMAAAALLFII).

The G.violaceus PSI reaction center is composed of one copy each of PsaA,B,C,D,E,F,L,M and Z, and forms trimeric complexes.

It is found in the cell inner membrane. The protein is Photosystem I reaction center subunit Z (psaZ) of Gloeobacter violaceus (strain ATCC 29082 / PCC 7421).